Consider the following 247-residue polypeptide: Ras-like protein family member 11B (247 aa).

Residues 28–245 (AGRRLVKIAV…ALSAKVRTVT (218 aa)) are small GTPase-like. GTP-binding positions include 39 to 46 (GASGVGKT), 86 to 93 (DTPGIQVH), and 151 to 154 (NKAD). Residues 202–228 (PKQQPSSTPEKRRTSLIPRPKSPNMQD) are disordered.

Belongs to the small GTPase superfamily. Ras family.

It carries out the reaction GTP + H2O = GDP + phosphate + H(+). The sequence is that of Ras-like protein family member 11B from Mus musculus (Mouse).